A 230-amino-acid chain; its full sequence is Extracellular deoxyribonuclease (230 aa).

The N-terminal stretch at 1–20 (MFRPLLSLCLALLVSAPAHA) is a signal peptide.

The protein belongs to the EndA/NucM nuclease family.

The protein resides in the secreted. The chain is Extracellular deoxyribonuclease (dns) from Aeromonas hydrophila.